The primary structure comprises 674 residues: Dystrophia myotonica WD repeat-containing protein (674 aa).

Residue alanine 2 is modified to N-acetylalanine. 2 disordered regions span residues 31 to 92 (GFYK…PALP) and 103 to 122 (EPDS…LGSG). Pro residues predominate over residues 53–65 (PVPPQPPQPPPGP). A compositionally biased stretch (low complexity) spans 66–77 (ASASGPGAAGPA). Residues 78–90 (SSPPPAGPGPGPA) show a composition bias toward pro residues. A compositionally biased stretch (low complexity) spans 107-118 (AGAGEPPATPAG). WD repeat units lie at residues 211 to 251 (IDKT…ASAP), 282 to 321 (VGEG…LRGL), 324 to 363 (SYFG…VVAR), 366 to 409 (GHKS…EAAG), and 413 to 453 (AGGA…LYPH). Disordered stretches follow at residues 384-419 (EEAA…APLS), 456-516 (LART…EPGT), 532-573 (RDRG…RSRL), and 637-674 (DEET…GTVV). Composition is skewed to low complexity over residues 457-478 (ARTR…SSRG) and 487-499 (PRSL…LPHP). Serine 495 is subject to Phosphoserine. Composition is skewed to gly residues over residues 500–509 (AGGGKAGGPG) and 550–563 (SRGG…GGEK). Arginine 551 is subject to Omega-N-methylarginine. The stretch at 601–638 (IAQERLTVLLFLEDCIITACQEGLICTWARPGKAFTDE) is one WD 6 repeat. A compositionally biased stretch (polar residues) spans 642–674 (AQTGEGSWPRSPSKSVVEGISSQPGNSPSGTVV).

In terms of assembly, component of the USP12/DMWD/WDR48 deubiquitinating complex. Interacts with USP12; promotes its enzymatic activity. Interacts with USP46.

The protein localises to the cytoplasm. It is found in the nucleus. It localises to the perikaryon. The protein resides in the cell projection. Its subcellular location is the dendrite. Functionally, regulator of the deubiquitinating USP12/DMWD/WDR48 complex. Functions as a cofactor that promotes USP12 enzymatic activity. The polypeptide is Dystrophia myotonica WD repeat-containing protein (Homo sapiens (Human)).